Here is a 238-residue protein sequence, read N- to C-terminus: Ion-translocating oxidoreductase complex subunit E (238 aa).

5 helical membrane passes run 41-61 (LGLG…VSLV), 71-91 (LPAF…LMQA), 95-115 (ELYQ…VILG), 130-150 (SFDG…LGGL), and 184-204 (GFLL…LIAL).

Belongs to the NqrDE/RnfAE family. In terms of assembly, the complex is composed of six subunits: RnfA, RnfB, RnfC, RnfD, RnfE and RnfG.

It localises to the cell inner membrane. In terms of biological role, part of a membrane-bound complex that couples electron transfer with translocation of ions across the membrane. In Pseudomonas aeruginosa (strain UCBPP-PA14), this protein is Ion-translocating oxidoreductase complex subunit E.